The chain runs to 136 residues: Large-conductance mechanosensitive channel (136 aa).

2 helical membrane-spanning segments follow: residues 10-30 (FAMR…AAFG) and 76-96 (GSFI…FSAV).

This sequence belongs to the MscL family. As to quaternary structure, homopentamer.

It is found in the cell inner membrane. Functionally, channel that opens in response to stretch forces in the membrane lipid bilayer. May participate in the regulation of osmotic pressure changes within the cell. This chain is Large-conductance mechanosensitive channel, found in Yersinia enterocolitica serotype O:8 / biotype 1B (strain NCTC 13174 / 8081).